Here is an 88-residue protein sequence, read N- to C-terminus: Bombyxin B-8 (88 aa).

The signal sequence occupies residues 1–18; it reads MKTSVIFVLIVLNLMWSG. Cystine bridges form between cysteine 28/cysteine 74, cysteine 40/cysteine 87, and cysteine 73/cysteine 78. Positions 47-65 are cleaved as a propeptide — c peptide like; sequence GGAQYAPYFWQKAYLGSRG.

This sequence belongs to the insulin family. In terms of assembly, heterodimer of a B chain and an A chain linked by two disulfide bonds.

The protein resides in the secreted. Brain peptide responsible for activation of prothoracic glands to produce ecdysone in insects. This Bombyx mori (Silk moth) protein is Bombyxin B-8 (BBXB8).